The sequence spans 142 residues: Succinate dehydrogenase subunit 6, mitochondrial (142 aa).

G2 is modified (N-acetylglycine).

In terms of assembly, component of complex II composed of eight subunits in plants: four classical SDH subunits SDH1, SDH2, SDH3 and SDH4 (a flavoprotein (FP), an iron-sulfur protein (IP), and a cytochrome b composed of a large and a small subunit.), as well as four subunits unknown in mitochondria from bacteria and heterotrophic eukaryotes.

It localises to the mitochondrion inner membrane. It participates in carbohydrate metabolism; tricarboxylic acid cycle. This is Succinate dehydrogenase subunit 6, mitochondrial from Arabidopsis thaliana (Mouse-ear cress).